A 388-amino-acid chain; its full sequence is Oligogalacturonate lyase (388 aa).

Its subcellular location is the periplasm. The catalysed reaction is 4-(4-deoxy-alpha-D-galact-4-enuronosyl)-D-galacturonate = 2 5-dehydro-4-deoxy-D-glucuronate. The protein operates within glycan metabolism; pectin degradation; 2-dehydro-3-deoxy-D-gluconate from pectin: step 3/5. Involved in degradation of pectin, which causes soft-rod disease in plants. The chain is Oligogalacturonate lyase (ogl) from Dickeya dadantii (strain 3937) (Erwinia chrysanthemi (strain 3937)).